Consider the following 361-residue polypeptide: Chorismate synthase (361 aa).

Arg-48 and Arg-54 together coordinate NADP(+). Residues Arg-125–Ser-127, Asn-238–Ala-239, Gly-278, Lys-293–Ser-297, and Arg-319 contribute to the FMN site.

It belongs to the chorismate synthase family. Homotetramer. FMNH2 is required as a cofactor.

It carries out the reaction 5-O-(1-carboxyvinyl)-3-phosphoshikimate = chorismate + phosphate. It functions in the pathway metabolic intermediate biosynthesis; chorismate biosynthesis; chorismate from D-erythrose 4-phosphate and phosphoenolpyruvate: step 7/7. Functionally, catalyzes the anti-1,4-elimination of the C-3 phosphate and the C-6 proR hydrogen from 5-enolpyruvylshikimate-3-phosphate (EPSP) to yield chorismate, which is the branch point compound that serves as the starting substrate for the three terminal pathways of aromatic amino acid biosynthesis. This reaction introduces a second double bond into the aromatic ring system. This chain is Chorismate synthase, found in Salmonella arizonae (strain ATCC BAA-731 / CDC346-86 / RSK2980).